The chain runs to 307 residues: Ubiquitin recognition factor in ER-associated degradation protein 1 (307 aa).

Position 1 is an N-acetylmethionine (M1). A phosphoserine mark is found at S129, S231, S245, S247, and S299. Disordered stretches follow at residues 231–256 and 288–307; these read SGNR…DIKR and GRFV…GRKP.

The protein belongs to the UFD1 family. In terms of assembly, heterodimer with NPLOC4, this heterodimer binds VCP and inhibits Golgi membrane fusion. Interacts with USP13. Interacts with ZFAND2B; probably through VCP. In terms of tissue distribution, found in adult heart, skeletal muscle and pancreas, and in fetal liver and kidney.

Its subcellular location is the nucleus. It localises to the cytoplasm. The protein resides in the cytosol. The protein operates within protein degradation; proteasomal ubiquitin-dependent pathway. Its function is as follows. Essential component of the ubiquitin-dependent proteolytic pathway which degrades ubiquitin fusion proteins. The ternary complex containing UFD1, VCP and NPLOC4 binds ubiquitinated proteins and is necessary for the export of misfolded proteins from the ER to the cytoplasm, where they are degraded by the proteasome. The NPLOC4-UFD1-VCP complex regulates spindle disassembly at the end of mitosis and is necessary for the formation of a closed nuclear envelope. It may be involved in the development of some ectoderm-derived structures. Acts as a negative regulator of type I interferon production via the complex formed with VCP and NPLOC4, which binds to RIGI and recruits RNF125 to promote ubiquitination and degradation of RIGI. This Homo sapiens (Human) protein is Ubiquitin recognition factor in ER-associated degradation protein 1.